Consider the following 890-residue polypeptide: Agglutinin-like protein ARB_02240 (890 aa).

A signal peptide spans 1–20; that stretch reads MRLTTSVLLWAATSVLQADA. Residues asparagine 106, asparagine 217, asparagine 583, and asparagine 654 are each glycosylated (N-linked (GlcNAc...) asparagine). Positions 680–872 are disordered; that stretch reads IPSGPTTRPE…GGAGSLSPST (193 aa). Low complexity-rich tracts occupy residues 693–753 and 760–790; these read TSST…TDSS and TTSTAESTETTEPTSTDASTESTSTATHSST. Residues 791 to 802 show a composition bias toward polar residues; sequence GSDPESTNTRHP. Composition is skewed to low complexity over residues 803-812 and 821-837; these read SSTASGSTTT and SSSSEGPVPTSMGTATT. Residues 838–848 show a composition bias toward gly residues; it reads TGGGSIPGSGT. Glycine 864 is lipidated: GPI-anchor amidated glycine. Residues 865-890 constitute a propeptide, removed in mature form; sequence AGSLSPSTWGKVVTCISSMALLVAFI.

Belongs to the ALS family. In terms of processing, the GPI-anchor is attached to the protein in the endoplasmic reticulum and serves to target the protein to the cell surface. There, the glucosamine-inositol phospholipid moiety is cleaved off and the GPI-modified mannoprotein is covalently attached via its lipidless GPI glycan remnant to the 1,6-beta-glucan of the outer cell wall layer.

The protein resides in the secreted. Its subcellular location is the cell membrane. It is found in the cell wall. Its function is as follows. Cell surface adhesion protein which mediates cell agglutination and host tissue adherence. This chain is Agglutinin-like protein ARB_02240, found in Arthroderma benhamiae (strain ATCC MYA-4681 / CBS 112371) (Trichophyton mentagrophytes).